We begin with the raw amino-acid sequence, 866 residues long: MEEGNNNEEVIHLNNFHCHRGQEWINLRDGPITISDSSDEERIPMLVTPAPQQHEEEDLDDDVILTEDDSEDDYGEFLDLGPPGISEFTKPSGQTEREPKPGPSHNQAANDIVNPRSEQKVIILEEGSLLYTESDPLETQNQSSEDSETELLSNLGESAALADDQAIEEDCWLDHPYFQSLNQQPREITNQVVPQERQPEAELGRLLFQHEFPGPAFPRPEPQQGGISGPSSPQPAHPLGEFEDQQLASDDEEPGPAFPMQESQEPNLENIWGQEAAEVDQELVELLVKETEARFPDVANGFIEEIIHFKNYYDLNVLCNFLLENPDYPKREDRIIINPSSSLLASQDETKLPKIDFFDYSKLTPLDQRCFIQAADLLMADFKVLSSQDIKWALHELKGHYAITRKALSDAIKKWQELSPETSGKRKKRKQMNQYSYIDFKFEQGDIKIEKRMFFLENKRRHCRSYDRRALLPAVQQEQEFYEQKIKEMAEHEDFLLALQMNEEQYQKDGQLIECRCCYGEFPFEELTQCADAHLFCKECLIRYAQEAVFGSGKLELSCMEGSCTCSFPTSELEKVLPQTILYKYYERKAEEEVAAAYADELVRCPSCSFPALLDSDVKRFSCPNPHCRKETCRKCQGLWKEHNGLTCEELAEKDDIKYRTSIEEKMTAARIRKCHKCGTGLIKSEGCNRMSCRCGAQMCYLCRVSINGYDHFCQHPRSPGAPCQECSRCSLWTDPTEDDEKLIEEIQKEAEEEQKRKNGENTFKRIGPPLEKPVEKVQRVEALPRPVPQNLPQPQMPPYAFAHPPFPLPPVRPVFNNFPLNMGPIPAPYVPPLPNVRVNYDFGPIHMPLEHNLPMHFGPQPRHRF.

3 disordered regions span residues 46–117, 131–161, and 211–240; these read LVTP…NPRS, YTES…SAAL, and EFPG…HPLG. The span at 55 to 76 shows a compositional bias: acidic residues; that stretch reads EEEDLDDDVILTEDDSEDDYGE. Glycyl lysine isopeptide (Lys-Gly) (interchain with G-Cter in SUMO2) cross-links involve residues leucine 80, threonine 89, and lysine 100. Residues 137-156 show a composition bias toward polar residues; it reads LETQNQSSEDSETELLSNLG. Glycyl lysine isopeptide (Lys-Gly) (interchain with G-Cter in SUMO2) cross-links involve residues lysine 351 and lysine 354. Position 419 is a phosphoserine (serine 419). Residues lysine 425, lysine 430, lysine 448, lysine 459, and lysine 485 each participate in a glycyl lysine isopeptide (Lys-Gly) (interchain with G-Cter in SUMO2) cross-link. A coiled-coil region spans residues 475-491; sequence VQQEQEFYEQKIKEMAE. Residues 511–728 form a TRIAD supradomain region; sequence QLIECRCCYG…SPGAPCQECS (218 aa). 6 residues coordinate Zn(2+): cysteine 515, cysteine 518, cysteine 537, cysteine 540, cysteine 605, and cysteine 608. The RING-type 1 zinc-finger motif lies at 515–564; it reads CRCCYGEFPFEELTQCADAHLFCKECLIRYAQEAVFGSGKLELSCMEGSC. Residues 583–648 form an IBR-type zinc finger; the sequence is YKYYERKAEE…LWKEHNGLTC (66 aa). Lysine 619 is covalently cross-linked (Glycyl lysine isopeptide (Lys-Gly) (interchain with G-Cter in SUMO2)). 6 residues coordinate Zn(2+): cysteine 623, cysteine 628, cysteine 633, cysteine 636, histidine 643, and cysteine 648. Glycyl lysine isopeptide (Lys-Gly) (interchain with G-Cter in SUMO2) cross-links involve residues lysine 658 and lysine 666. Residues cysteine 675 and cysteine 678 each contribute to the Zn(2+) site. Residues 675 to 703 form an RING-type 2; atypical zinc finger; sequence CHKCGTGLIKSEGCNRMSCRCGAQMCYLC. Cysteine 688 is a catalytic residue. Cysteine 693, cysteine 695, cysteine 700, cysteine 703, and histidine 716 together coordinate Zn(2+). Phosphoserine; by MAPK1 is present on serine 719. Cysteine 724 is a binding site for Zn(2+). A coiled-coil region spans residues 737–763; it reads TEDDEKLIEEIQKEAEEEQKRKNGENT. Residues lysine 765 and lysine 773 each participate in a glycyl lysine isopeptide (Lys-Gly) (interchain with G-Cter in SUMO2) cross-link.

In terms of assembly, interacts with UBE2L3 and to some extent with UBE2L6. Interacts with TRAF3, TLR3, TLR4, TLR5 and TLR9. Isoform 3/ZIN binds RIPK1. As to quaternary structure, (Microbial infection) Isoform 3/ZIN binds RIPK1 and HIV Vif. In terms of processing, auto-ubiquitinated. Phosphorylation at Ser-719 enhances acceptor ubiquitin binding and chain-type specificity towards 'Lys-63' di-ubiquitin but not di-ubiquitin with other linkage types. As to expression, ubiquitous, with the highest levels of expression in testis and peripheral blood leukocytes.

It localises to the cytoplasm. The protein resides in the cytoplasmic vesicle. The protein localises to the clathrin-coated vesicle. The catalysed reaction is S-ubiquitinyl-[E2 ubiquitin-conjugating enzyme]-L-cysteine + [acceptor protein]-L-lysine = [E2 ubiquitin-conjugating enzyme]-L-cysteine + N(6)-ubiquitinyl-[acceptor protein]-L-lysine.. Its pathway is protein modification; protein ubiquitination. Its activity is regulated as follows. Allosterically activated by 'Lys-63'-linked di-ubiquitin. Its function is as follows. E3 ubiquitin ligase which accepts ubiquitin from specific E2 ubiquitin-conjugating enzymes, and then transfers it to substrates promoting their ubiquitination. Plays a role in the regulation of antiviral responses by promoting the degradation of TRAF3, TLR4 and TLR9. In turn, down-regulates NF-kappa-B and IRF3 activation as well as beta interferon production. Also participates in the regulation of autophagy by ubiquitinating BECN1 leading to its degradation and autophagy inhibition. Plays a role in ARC-dependent synaptic plasticity by mediating ARC ubiquitination resulting in its rapid proteasomal degradation. Plays aso an essential role in spermatogenesis and male fertility. Mechanistically, regulates meiosis by promoting the degradation of PRKACB through the ubiquitin-mediated lysosome pathway. Modulates the gonadotropin-releasing hormone signal pathway by affecting the stability of STAU2 that is required for the microtubule-dependent transport of neuronal RNA from the cell body to the dendrite. Functionally, inhibits TNF and IL-1 mediated activation of NF-kappa-B. Promotes TNF and RIP mediated apoptosis. The protein is E3 ubiquitin-protein ligase RNF216 (RNF216) of Homo sapiens (Human).